The following is a 281-amino-acid chain: tRNA pseudouridine synthase A (281 aa).

Aspartate 55 (nucleophile) is an active-site residue. Substrate is bound at residue tyrosine 110.

The protein belongs to the tRNA pseudouridine synthase TruA family.

It carries out the reaction uridine(38/39/40) in tRNA = pseudouridine(38/39/40) in tRNA. Functionally, formation of pseudouridine at positions 38, 39 and 40 in the anticodon stem and loop of transfer RNAs. This Methanocorpusculum labreanum (strain ATCC 43576 / DSM 4855 / Z) protein is tRNA pseudouridine synthase A.